Reading from the N-terminus, the 210-residue chain is ER membrane protein complex subunit 8 (210 aa).

The MPN domain maps to 4–150; it reads VKLTTQAYCK…IHVYEHHENR (147 aa).

This sequence belongs to the EMC8/EMC9 family. In terms of assembly, component of the ER membrane protein complex (EMC). EMC8 and EMC9 are mutually exclusive subunits of the EMC complex. Expressed in liver, pancreas, heart, lung, kidney, brain, skeletal muscle, and placenta. Expression levels are highest in pancreas and moderate in heart, skeletal muscle, and placenta.

The protein resides in the endoplasmic reticulum membrane. Functionally, part of the endoplasmic reticulum membrane protein complex (EMC) that enables the energy-independent insertion into endoplasmic reticulum membranes of newly synthesized membrane proteins. Preferentially accommodates proteins with transmembrane domains that are weakly hydrophobic or contain destabilizing features such as charged and aromatic residues. Involved in the cotranslational insertion of multi-pass membrane proteins in which stop-transfer membrane-anchor sequences become ER membrane spanning helices. It is also required for the post-translational insertion of tail-anchored/TA proteins in endoplasmic reticulum membranes. By mediating the proper cotranslational insertion of N-terminal transmembrane domains in an N-exo topology, with translocated N-terminus in the lumen of the ER, controls the topology of multi-pass membrane proteins like the G protein-coupled receptors. By regulating the insertion of various proteins in membranes, it is indirectly involved in many cellular processes. In Homo sapiens (Human), this protein is ER membrane protein complex subunit 8 (EMC8).